We begin with the raw amino-acid sequence, 271 residues long: Malonyl-[acyl-carrier protein] O-methyltransferase (271 aa).

This sequence belongs to the methyltransferase superfamily.

It catalyses the reaction malonyl-[ACP] + S-adenosyl-L-methionine = malonyl-[ACP] methyl ester + S-adenosyl-L-homocysteine. It functions in the pathway cofactor biosynthesis; biotin biosynthesis. Converts the free carboxyl group of a malonyl-thioester to its methyl ester by transfer of a methyl group from S-adenosyl-L-methionine (SAM). It allows to synthesize pimeloyl-ACP via the fatty acid synthetic pathway. This Halalkalibacterium halodurans (strain ATCC BAA-125 / DSM 18197 / FERM 7344 / JCM 9153 / C-125) (Bacillus halodurans) protein is Malonyl-[acyl-carrier protein] O-methyltransferase.